We begin with the raw amino-acid sequence, 467 residues long: 3-isopropylmalate dehydratase large subunit (467 aa).

Residues Cys-348, Cys-409, and Cys-412 each contribute to the [4Fe-4S] cluster site.

It belongs to the aconitase/IPM isomerase family. LeuC type 1 subfamily. In terms of assembly, heterodimer of LeuC and LeuD. The cofactor is [4Fe-4S] cluster.

The catalysed reaction is (2R,3S)-3-isopropylmalate = (2S)-2-isopropylmalate. The protein operates within amino-acid biosynthesis; L-leucine biosynthesis; L-leucine from 3-methyl-2-oxobutanoate: step 2/4. Its function is as follows. Catalyzes the isomerization between 2-isopropylmalate and 3-isopropylmalate, via the formation of 2-isopropylmaleate. In Magnetococcus marinus (strain ATCC BAA-1437 / JCM 17883 / MC-1), this protein is 3-isopropylmalate dehydratase large subunit.